Here is a 146-residue protein sequence, read N- to C-terminus: MNILVLNGPNLDRLGKRQPEIYGRTTLADVEKLLVKRADALGVTVIVKQSNYEGELIDWVHEAADAGWPVIINPGGLTHTSVSLRDALAEIHDGAGFVEVHISNIHAREEFRHHSFLSPIARGVIAGLGVMGYELALEYLVLNSHS.

Residue Tyr-22 is the Proton acceptor of the active site. Asn-73, His-79, and Asp-86 together coordinate substrate. Residue His-101 is the Proton donor of the active site. Residues 102 to 103 and Arg-112 contribute to the substrate site; that span reads IS.

The protein belongs to the type-II 3-dehydroquinase family. As to quaternary structure, homododecamer.

It carries out the reaction 3-dehydroquinate = 3-dehydroshikimate + H2O. It functions in the pathway metabolic intermediate biosynthesis; chorismate biosynthesis; chorismate from D-erythrose 4-phosphate and phosphoenolpyruvate: step 3/7. Its function is as follows. Catalyzes a trans-dehydration via an enolate intermediate. This Corynebacterium pseudotuberculosis (strain C231) protein is 3-dehydroquinate dehydratase (aroQ).